Consider the following 125-residue polypeptide: MNKEEIIQAIKEMKVTELVELVKALEEEFGVSAAMPVAAVGSPVAGAAAAAPVEEKTTFDVILKDAGANKIKVLKVVREITGLGLKEAKDLVDSTPKPIKEGVSKQEAEEIKAKLEAEGAVVEIK.

The protein belongs to the bacterial ribosomal protein bL12 family. As to quaternary structure, homodimer. Part of the ribosomal stalk of the 50S ribosomal subunit. Forms a multimeric L10(L12)X complex, where L10 forms an elongated spine to which 2 to 4 L12 dimers bind in a sequential fashion. Binds GTP-bound translation factors.

Forms part of the ribosomal stalk which helps the ribosome interact with GTP-bound translation factors. Is thus essential for accurate translation. The polypeptide is Large ribosomal subunit protein bL12 (Dictyoglomus thermophilum (strain ATCC 35947 / DSM 3960 / H-6-12)).